The primary structure comprises 486 residues: Glutamyl-tRNA(Gln) amidotransferase subunit A (486 aa).

Catalysis depends on charge relay system residues lysine 77 and serine 152. The Acyl-ester intermediate role is filled by serine 176.

It belongs to the amidase family. GatA subfamily. As to quaternary structure, heterotrimer of A, B and C subunits.

The enzyme catalyses L-glutamyl-tRNA(Gln) + L-glutamine + ATP + H2O = L-glutaminyl-tRNA(Gln) + L-glutamate + ADP + phosphate + H(+). In terms of biological role, allows the formation of correctly charged Gln-tRNA(Gln) through the transamidation of misacylated Glu-tRNA(Gln) in organisms which lack glutaminyl-tRNA synthetase. The reaction takes place in the presence of glutamine and ATP through an activated gamma-phospho-Glu-tRNA(Gln). The sequence is that of Glutamyl-tRNA(Gln) amidotransferase subunit A from Pediococcus pentosaceus (strain ATCC 25745 / CCUG 21536 / LMG 10740 / 183-1w).